The chain runs to 144 residues: Transcriptional regulator SlyA (144 aa).

The HTH marR-type domain occupies 2-135; that stretch reads ESPLGSDLAR…LLHLIRKLEQ (134 aa). The segment at residues 49–72 is a DNA-binding region (H-T-H motif); the sequence is QIQLAKAIGIEQPSLVRTLDQLEE.

Belongs to the SlyA family. As to quaternary structure, homodimer.

Its function is as follows. Transcription regulator that can specifically activate or repress expression of target genes. This chain is Transcriptional regulator SlyA, found in Klebsiella pneumoniae (strain 342).